Reading from the N-terminus, the 329-residue chain is Serine dehydratase-like (329 aa).

The residue at position 1 (methionine 1) is an N-acetylmethionine. At lysine 48 the chain carries N6-(pyridoxal phosphate)lysine.

The protein belongs to the serine/threonine dehydratase family. Monomer. Homodimer. Pyridoxal 5'-phosphate serves as cofactor. In terms of tissue distribution, abundantly expressed in liver.

It catalyses the reaction L-serine = pyruvate + NH4(+). The enzyme catalyses L-threonine = 2-oxobutanoate + NH4(+). The catalysed reaction is L-glutamate = D-glutamate. Its function is as follows. Catalyzes the pyridoxal-phosphate-dependent dehydrative deamination of L-threonine and L-serine to ammonia and alpha-ketobutyrate and pyruvate, respectively. Also exhibits racemase activity towards L-glutamate and D-glutamate. This chain is Serine dehydratase-like (Sdsl), found in Mus musculus (Mouse).